The chain runs to 467 residues: Chromosomal replication initiator protein DnaA (467 aa).

The interval 1 to 87 (MSSSLWLQCL…VGSRPVVAPK (87 aa)) is domain I, interacts with DnaA modulators. The domain II stretch occupies residues 87–130 (KPAPVRTAADVAAESSAPAQLAQRKPIHKTWDDDSAAADITHRS). Residues 131 to 347 (NVNPKHKFNN…GALNRVIANA (217 aa)) form a domain III, AAA+ region region. The ATP site is built by G175, G177, K178, and T179. Residues 348–467 (NFTGRPITID…YSNLIRTLSS (120 aa)) are domain IV, binds dsDNA.

It belongs to the DnaA family. Oligomerizes as a right-handed, spiral filament on DNA at oriC.

The protein resides in the cytoplasm. In terms of biological role, plays an essential role in the initiation and regulation of chromosomal replication. ATP-DnaA binds to the origin of replication (oriC) to initiate formation of the DNA replication initiation complex once per cell cycle. Binds the DnaA box (a 9 base pair repeat at the origin) and separates the double-stranded (ds)DNA. Forms a right-handed helical filament on oriC DNA; dsDNA binds to the exterior of the filament while single-stranded (ss)DNA is stabiized in the filament's interior. The ATP-DnaA-oriC complex binds and stabilizes one strand of the AT-rich DNA unwinding element (DUE), permitting loading of DNA polymerase. After initiation quickly degrades to an ADP-DnaA complex that is not apt for DNA replication. Binds acidic phospholipids. This is Chromosomal replication initiator protein DnaA from Vibrio cholerae serotype O1 (strain ATCC 39315 / El Tor Inaba N16961).